We begin with the raw amino-acid sequence, 251 residues long: Hydroxyacylglutathione hydrolase (251 aa).

Residues His55, His57, Asp59, His60, His112, Asp131, and His169 each contribute to the Zn(2+) site.

This sequence belongs to the metallo-beta-lactamase superfamily. Glyoxalase II family. As to quaternary structure, monomer. Zn(2+) serves as cofactor.

The catalysed reaction is an S-(2-hydroxyacyl)glutathione + H2O = a 2-hydroxy carboxylate + glutathione + H(+). The protein operates within secondary metabolite metabolism; methylglyoxal degradation; (R)-lactate from methylglyoxal: step 2/2. Thiolesterase that catalyzes the hydrolysis of S-D-lactoyl-glutathione to form glutathione and D-lactic acid. The protein is Hydroxyacylglutathione hydrolase of Erythrobacter litoralis (strain HTCC2594).